A 477-amino-acid chain; its full sequence is Regulatory protein HrpB (477 aa).

Residues 375 to 477 (RRAYRYIIEN…NEAPSETIWR (103 aa)) enclose the HTH araC/xylS-type domain. DNA-binding regions (H-T-H motif) lie at residues 393–414 (REVA…KSAV) and 444–467 (IIDT…RKQF).

In terms of biological role, positive regulation of hypersensitive response genes involved in plant pathogenicity and partly of its own synthesis in minimal medium. This chain is Regulatory protein HrpB (hrpB), found in Ralstonia nicotianae (strain ATCC BAA-1114 / GMI1000) (Ralstonia solanacearum).